We begin with the raw amino-acid sequence, 671 residues long: Putative ubiquitin thioesterase 232R (671 aa).

Disordered regions lie at residues glutamate 36–serine 62, serine 100–glutamine 123, asparagine 171–phenylalanine 203, and glutamate 250–serine 319. Over residues proline 110–glutamine 123 the composition is skewed to low complexity. Residues arginine 182–arginine 200 show a composition bias toward pro residues. Low complexity predominate over residues serine 255–lysine 271. The span at proline 272–serine 319 shows a compositional bias: basic residues. One can recognise an OTU domain in the interval phenylalanine 392–phenylalanine 521. Aspartate 400 is a catalytic residue. The active-site Nucleophile is cysteine 403. Histidine 514 is an active-site residue. Residues lysine 589–proline 625 are disordered.

The catalysed reaction is Thiol-dependent hydrolysis of ester, thioester, amide, peptide and isopeptide bonds formed by the C-terminal Gly of ubiquitin (a 76-residue protein attached to proteins as an intracellular targeting signal).. Its function is as follows. Hydrolase that can remove conjugated ubiquitin from proteins and may therefore play an important regulatory role at the level of protein turnover by preventing degradation. This is Putative ubiquitin thioesterase 232R from Acheta domesticus (House cricket).